The chain runs to 487 residues: MTTQPEQIDLSRTHMVGIGGAGMSGIARILLARGYSVTGSDMKDSRSVLALRAAGAEVAIGHDAANVTGGAELPTVVVTSFAAIPKDNPELTAAREAGIPIVRRSDVLAELMSDRRAFLLAGTHGKTSTTSMAVVGVQAAGLDPSFAIGGQLNRAGTNAHHGTGEIFIAEADESDGSFLSYSPEVAVITNIEPDHLDYYGTEEAYVAIFDEFATKVTPGGYLVCCLDDPGAAALAARVRAAGTAPTVLGYGSRAAADQHPDIPAAAIIEEMIPDARGTAAKVRFNLPGQEERYEDIRVAIPGAHMTLNGVAAITGGALLGADLEKVIAGVADFDGVRRRFEYHGEAGGVRVYDDYAHHPTEVTAVLTAAKELVEATDAGRIIAVFQPHLYSRTMNFASEFARALSLADEVVLLDIFGAREQPVEGVDSRIIGEKLTCEWHFQPDFSAVAEQVIGIAKPGDVVLTIGAGTVTMLADEILRCGREAQGE.

Residue 122–128 (GTHGKTS) participates in ATP binding.

This sequence belongs to the MurCDEF family.

Its subcellular location is the cytoplasm. It catalyses the reaction UDP-N-acetyl-alpha-D-muramate + L-alanine + ATP = UDP-N-acetyl-alpha-D-muramoyl-L-alanine + ADP + phosphate + H(+). It functions in the pathway cell wall biogenesis; peptidoglycan biosynthesis. Its function is as follows. Cell wall formation. This chain is UDP-N-acetylmuramate--L-alanine ligase, found in Corynebacterium urealyticum (strain ATCC 43042 / DSM 7109).